A 196-amino-acid polypeptide reads, in one-letter code: SPRY domain-containing protein 7 (196 aa).

Position 2 is an N-acetylalanine (Ala2). Residues 2–184 enclose the B30.2/SPRY domain; sequence AASVFCCLRC…FSEFYHTPPP (183 aa).

The polypeptide is SPRY domain-containing protein 7 (SPRYD7) (Bos taurus (Bovine)).